We begin with the raw amino-acid sequence, 148 residues long: Inner membrane protein YccF (148 aa).

At 1–14 the chain is on the periplasmic side; the sequence is MRTVLNILNFVLGG. A helical transmembrane segment spans residues 15-37; sequence FATTLGWLLATLVSIVLIFTLPL. Topologically, residues 38–76 are cytoplasmic; the sequence is TRSCWEITKLSLVPYGNEAIHVDELNPAGKNVLLNTGGT. The chain crosses the membrane as a helical span at residues 77-99; that stretch reads VLNIFWLIFFGWWLCLMHIATGI. At 100–102 the chain is on the periplasmic side; sequence AQC. The chain crosses the membrane as a helical span at residues 103 to 125; that stretch reads ISIIGIPVGIANFKIAAIALWPV. Over 126-148 the chain is Cytoplasmic; that stretch reads GRRVVSVETAQAAREANARRRFE.

The protein localises to the cell inner membrane. This is Inner membrane protein YccF (yccF) from Escherichia coli (strain K12).